A 124-amino-acid chain; its full sequence is Insulin-like growth factor 1 (124 aa).

A propeptide spanning residues 1-19 (IHFFYLGLCLLTLTSSAAA) is cleaved from the precursor. The interval 20-48 (GPETLCGAELVDALQFVCGDRGFYFSKPT) is b. 3 disulfides stabilise this stretch: Cys-25–Cys-67, Cys-37–Cys-80, and Cys-66–Cys-71. Residues 49-60 (GYGSSSRRLHHK) form a c region. Residues 61–81 (GIVDECCFQSCDLRRLEMYCA) form an a region. Positions 82–89 (PIKPPKSA) are d. A disordered region spans residues 86-124 (PKSARSVRAQRHTDMPKAQKEVHLKNTSRGNTGNRNYRM). A propeptide spans 90-124 (RSVRAQRHTDMPKAQKEVHLKNTSRGNTGNRNYRM) (e peptide). Positions 96-109 (RHTDMPKAQKEVHL) are enriched in basic and acidic residues. Residues 110-124 (KNTSRGNTGNRNYRM) are compositionally biased toward polar residues.

The protein belongs to the insulin family.

It is found in the secreted. The insulin-like growth factors, isolated from plasma, are structurally and functionally related to insulin but have a much higher growth-promoting activity. Acts as a ligand for IGF1R. Binds to the alpha subunit of IGF1R, leading to the activation of the intrinsic tyrosine kinase activity which autophosphorylates tyrosine residues in the beta subunit thus initiatiating a cascade of down-stream signaling events leading to activation of the PI3K-AKT/PKB and the Ras-MAPK pathways. Binds to integrins. Its binding to integrins and subsequent ternary complex formation with integrins and IGFR1 are essential for IGF1 signaling. This Coturnix japonica (Japanese quail) protein is Insulin-like growth factor 1.